A 614-amino-acid chain; its full sequence is Probable Xaa-Pro aminopeptidase P (614 aa).

The Mn(2+) site is built by aspartate 409, aspartate 420, glutamate 518, and glutamate 532.

This sequence belongs to the peptidase M24B family. Requires Mn(2+) as cofactor.

The catalysed reaction is Release of any N-terminal amino acid, including proline, that is linked to proline, even from a dipeptide or tripeptide.. Catalyzes the removal of a penultimate prolyl residue from the N-termini of peptides. This Aspergillus niger (strain ATCC MYA-4892 / CBS 513.88 / FGSC A1513) protein is Probable Xaa-Pro aminopeptidase P (ampp).